The following is a 529-amino-acid chain: ATP synthase F(1) complex catalytic subunit beta, mitochondrial (529 aa).

The N-terminal 46 residues, 1–46 (MLSLVGRVASASASGALRGLNPLAALPQAHLLLRTAPAGVHPARDY), are a transit peptide targeting the mitochondrion. Serine 106 carries O-linked (GlcNAc) serine glycosylation. N6-acetyllysine; alternate occurs at positions 124, 133, and 161. N6-succinyllysine; alternate is present on residues lysine 124, lysine 133, and lysine 161. Position 198 is an N6-acetyllysine (lysine 198). Positions 209, 210, 211, 212, 213, and 214 each coordinate ADP. Glycine 209 provides a ligand contact to ATP. The phosphate site is built by glycine 209, valine 210, glycine 211, lysine 212, and threonine 213. ATP contacts are provided by glycine 211, lysine 212, threonine 213, and valine 214. Threonine 213 is a Mg(2+) binding site. Residue glutamate 238 participates in Mg(2+) binding. Arginine 239 lines the ATP pocket. Lysine 259 and lysine 264 each carry N6-acetyllysine; alternate. N6-succinyllysine; alternate is present on residues lysine 259 and lysine 264. Phosphothreonine is present on threonine 312. Serine 415 carries the post-translational modification Phosphoserine. Lysine 426 carries the N6-acetyllysine modification. Serine 433 bears the Phosphoserine mark. N6-acetyllysine occurs at positions 480 and 485. N6-acetyllysine; alternate is present on lysine 522. Lysine 522 is subject to N6-succinyllysine; alternate. At serine 529 the chain carries Phosphoserine.

This sequence belongs to the ATPase alpha/beta chains family. In terms of assembly, homotrimer. Component of the ATP synthase complex composed at least of ATP5F1A/subunit alpha, ATP5F1B/subunit beta, ATP5MC1/subunit c (homooctomer), MT-ATP6/subunit a, MT-ATP8/subunit 8, ATP5ME/subunit e, ATP5MF/subunit f, ATP5MG/subunit g, ATP5MK/subunit k, ATP5MJ/subunit j, ATP5F1C/subunit gamma, ATP5F1D/subunit delta, ATP5F1E/subunit epsilon, ATP5PF/subunit F6, ATP5PB/subunit b, ATP5PD/subunit d, ATP5PO/subunit OSCP. ATP synthase complex consists of a soluble F(1) head domain (subunits alpha(3) and beta(3)) - the catalytic core - and a membrane F(0) domain - the membrane proton channel (subunits c, a, 8, e, f, g, k and j). These two domains are linked by a central stalk (subunits gamma, delta, and epsilon) rotating inside the F1 region and a stationary peripheral stalk (subunits F6, b, d, and OSCP). Interacts with PPIF. Interacts with BCL2L1 isoform BCL-X(L); the interaction mediates the association of BCL2L1 isoform BCL-X(L) with the mitochondrial membrane F(1)F(0) ATP synthase and enhances neurons metabolic efficiency. Interacts with CLN5 and PPT1. Interacts with S100A1; this interaction increases F1-ATPase activity. Interacts with MTLN. Interacts with TTC5/STRAP; the interaction results in decreased mitochondrial ATP production.

It localises to the mitochondrion inner membrane. It carries out the reaction ATP + H2O + 4 H(+)(in) = ADP + phosphate + 5 H(+)(out). Catalytic subunit beta, of the soluble F(1) head domain within the mitochondrial ATP synthase complex (F(1)F(0) ATP synthase or complex V) that produces ATP from ADP and phosphate inorganique in the presence of a proton gradient across the membrane which is generated by electron transport complexes of the respiratory chain. With the non-catalytic subunit alpha (ATP5F1A), forms the catalytic core in the F(1) domain. ATP synthase complex consist of two structural domains, F(1) - containing the extramembraneous catalytic core, and F(0) - containing the membrane proton channel, linked together by a central stalk and a peripheral stalk. During catalysis, ATP synthesis in the catalytic domain of F(1) is coupled via a rotary mechanism of the central stalk subunits to proton translocation. Its function is as follows. Catalytic subunit beta, of the mitochondrial membrane ATP synthase complex (F(1)F(0) ATP synthase or Complex V) that produces ATP from ADP in the presence of a proton gradient across the membrane which is generated by electron transport complexes of the respiratory chain. ATP synthase complex consist of a soluble F(1) head domain - the catalytic core - and a membrane F(1) domain - the membrane proton channel. These two domains are linked by a central stalk rotating inside the F(1) region and a stationary peripheral stalk. During catalysis, ATP synthesis in the catalytic domain of F(1) is coupled via a rotary mechanism of the central stalk subunits to proton translocation. In vivo, can only synthesize ATP although its ATP hydrolase activity can be activated artificially in vitro. With the subunit alpha (ATP5F1A), forms the catalytic core in the F(1) domain. This is ATP synthase F(1) complex catalytic subunit beta, mitochondrial from Rattus norvegicus (Rat).